A 178-amino-acid polypeptide reads, in one-letter code: Large ribosomal subunit protein uL6 (178 aa).

The protein belongs to the universal ribosomal protein uL6 family. As to quaternary structure, part of the 50S ribosomal subunit.

In terms of biological role, this protein binds to the 23S rRNA, and is important in its secondary structure. It is located near the subunit interface in the base of the L7/L12 stalk, and near the tRNA binding site of the peptidyltransferase center. The polypeptide is Large ribosomal subunit protein uL6 (Listeria innocua serovar 6a (strain ATCC BAA-680 / CLIP 11262)).